Consider the following 311-residue polypeptide: m7GpppX diphosphatase (311 aa).

Residues glutamate 159, lysine 181, and 242–253 (HYQPSFYHLHVH) contribute to the substrate site. The Histidine triad motif signature appears at 249 to 253 (HLHVH). Residue histidine 251 is the Nucleophile of the active site.

It belongs to the HIT family. Expressed in neurons in the ventral cord, the nerve ring and the pharynx.

The protein localises to the nucleus. The enzyme catalyses a 5'-end (N(7)-methyl 5'-triphosphoguanosine)-ribonucleoside in mRNA + H2O = N(7)-methyl-GMP + a 5'-end diphospho-ribonucleoside in mRNA + 2 H(+). The catalysed reaction is a 5'-end (N(2),N(2),N(7)-trimethyl 5'-triphosphoguanosine)-ribonucleoside in mRNA + H2O = (N(2),N(2),N(7))-trimethyl-GMP + a 5'-end diphospho-ribonucleoside in mRNA + 2 H(+). The hydrolytic product 7-methylguanosine diphosphate (m7GDP) efficiently inhibits the decapping scavenger activity and acts as a competitive inhibitor in vitro. Functionally, decapping scavenger enzyme that catalyzes the cleavage of a residual cap structure following the degradation of mRNAs of the 3'-&gt;5' exosome-mediated mRNA decay pathway. Hydrolyzes cap analog structures like 7-methylguanosine nucleoside triphosphate (m7GpppG) and tri-methyl guanosine nucleoside triphosphate (m3(2,2,7)GpppG) with up to 2 nucleotide substrates (small capped oligoribonucleotides) and specifically releases 5'-phosphorylated RNA fragments and 7-methylguanosine monophosphate (m7GMP). Does not hydrolyze unmethylated cap analog (GpppG) and shows no decapping activity on intact m7GpppG-capped mRNA molecules. Does not hydrolyze 7-methylguanosine diphosphate (m7GDP) and tri-methylguanosine diphosphate (m3(2,2,7)GDP) to m(7)GMP and m3(2,2,7)GMP, respectively. May also play a role in the 5'-&gt;3 mRNA decay pathway; m7GDP, the downstream product released by the 5'-&gt;3' mRNA mediated decapping activity, may be also converted by dcs-1 to m7GMP. Binds to m7GpppG and strongly to m7GDP. In Caenorhabditis elegans, this protein is m7GpppX diphosphatase (dcs-1).